The following is a 271-amino-acid chain: Tryptophan synthase alpha chain (271 aa).

Catalysis depends on proton acceptor residues Glu-49 and Asp-60.

Belongs to the TrpA family. In terms of assembly, tetramer of two alpha and two beta chains.

It carries out the reaction (1S,2R)-1-C-(indol-3-yl)glycerol 3-phosphate + L-serine = D-glyceraldehyde 3-phosphate + L-tryptophan + H2O. It functions in the pathway amino-acid biosynthesis; L-tryptophan biosynthesis; L-tryptophan from chorismate: step 5/5. Its function is as follows. The alpha subunit is responsible for the aldol cleavage of indoleglycerol phosphate to indole and glyceraldehyde 3-phosphate. This chain is Tryptophan synthase alpha chain, found in Nitrosococcus oceani (strain ATCC 19707 / BCRC 17464 / JCM 30415 / NCIMB 11848 / C-107).